The chain runs to 335 residues: Dihydroorotate dehydrogenase (quinone) (335 aa).

FMN-binding positions include 59–63 (AGLDK) and threonine 83. Lysine 63 lines the substrate pocket. 108 to 112 (NRMGF) contributes to the substrate binding site. FMN is bound by residues asparagine 136 and asparagine 169. Substrate is bound at residue asparagine 169. The Nucleophile role is filled by serine 172. Asparagine 174 lines the substrate pocket. 2 residues coordinate FMN: lysine 214 and threonine 242. 243–244 (NT) is a binding site for substrate. FMN-binding positions include glycine 265, glycine 294, and 315-316 (YS).

The protein belongs to the dihydroorotate dehydrogenase family. Type 2 subfamily. As to quaternary structure, monomer. Requires FMN as cofactor.

The protein localises to the cell membrane. It carries out the reaction (S)-dihydroorotate + a quinone = orotate + a quinol. The protein operates within pyrimidine metabolism; UMP biosynthesis via de novo pathway; orotate from (S)-dihydroorotate (quinone route): step 1/1. Catalyzes the conversion of dihydroorotate to orotate with quinone as electron acceptor. The chain is Dihydroorotate dehydrogenase (quinone) from Neisseria meningitidis serogroup A / serotype 4A (strain DSM 15465 / Z2491).